The following is a 92-amino-acid chain: Small ribosomal subunit protein bS21 (92 aa).

Residues 37-92 (QREGTFREMKRRNHYEKPSEKKARQKAEAIRRARKLARKRAQREGLIAKRGGTTRR) form a disordered region. Over residues 51 to 67 (YEKPSEKKARQKAEAIR) the composition is skewed to basic and acidic residues. Basic residues predominate over residues 68–77 (RARKLARKRA).

It belongs to the bacterial ribosomal protein bS21 family.

The chain is Small ribosomal subunit protein bS21 from Maricaulis maris (strain MCS10) (Caulobacter maris).